The sequence spans 149 residues: Calmodulin (149 aa).

At Ala2 the chain carries N-acetylalanine. EF-hand domains are found at residues 8–43, 44–79, 81–116, and 117–149; these read EQIA…LGQN, PTEA…KMKD, DSEE…LGEK, and LTDE…MMSK. Asp21, Asp23, Asp25, Thr27, Glu32, Asp57, Asp59, Asn61, Thr63, Glu68, Asp94, Asp96, Asn98, and Glu105 together coordinate Ca(2+). An N6,N6,N6-trimethyllysine modification is found at Lys116. Ca(2+) is bound by residues Asp130, Asp132, Asp134, Gln136, and Glu141.

Belongs to the calmodulin family.

In terms of biological role, calmodulin mediates the control of a large number of enzymes, ion channels and other proteins by Ca(2+). Among the enzymes to be stimulated by the calmodulin-Ca(2+) complex are a number of protein kinases and phosphatases. The sequence is that of Calmodulin (cam) from Saccharina japonica (Sweet kelp).